The sequence spans 282 residues: Endochitinase 4 (282 aa).

Residues 1–282 enclose the GH18 domain; it reads GAKNGVHPPL…TWSINWDGSK (282 aa). The Proton donor role is filled by Glu-112. Asn-265 is a glycosylation site (N-linked (GlcNAc...) asparagine).

It belongs to the glycosyl hydrolase 18 family. Chitinase class V subfamily.

The protein localises to the secreted. The enzyme catalyses Random endo-hydrolysis of N-acetyl-beta-D-glucosaminide (1-&gt;4)-beta-linkages in chitin and chitodextrins.. In terms of biological role, secreted chitinase involved in the degradation of chitin, a component of the cell walls of fungi and exoskeletal elements of some animals (including worms and arthropods). Participates in the infection process and directly acts in the penetration process of the host cuticle. The sequence is that of Endochitinase 4 (chi4) from Metarhizium anisopliae (Entomophthora anisopliae).